The following is a 332-amino-acid chain: L-lactate dehydrogenase A chain (332 aa).

Ala2 bears the N-acetylalanine mark. The residue at position 5 (Lys5) is an N6-acetyllysine; alternate. N6-succinyllysine; alternate is present on Lys5. The residue at position 14 (Lys14) is an N6-acetyllysine. Thr18 bears the Phosphothreonine mark. NAD(+) is bound at residue 29–57 (GAVGMACAISILMKDLADELALVDVIEDK). Lys57 carries the N6-acetyllysine; alternate modification. Lys57 is covalently cross-linked (Glycyl lysine isopeptide (Lys-Gly) (interchain with G-Cter in SUMO2); alternate). Lys81 is modified (N6-acetyllysine). Arg99 is an NAD(+) binding site. Residue Arg106 participates in substrate binding. Lys118 carries the N6-acetyllysine; alternate modification. At Lys118 the chain carries N6-succinyllysine; alternate. The residue at position 126 (Lys126) is an N6-acetyllysine. Asn138 contacts NAD(+). The substrate site is built by Asn138 and Arg169. His193 functions as the Proton acceptor in the catalytic mechanism. Residues Lys224 and Lys232 each carry the N6-acetyllysine modification. Position 239 is a phosphotyrosine (Tyr239). At Lys243 the chain carries N6-acetyllysine. Thr248 serves as a coordination point for substrate. The residue at position 309 (Thr309) is a Phosphothreonine. N6-acetyllysine; alternate is present on Lys318. Lys318 carries the N6-succinyllysine; alternate modification. Residue Thr322 is modified to Phosphothreonine.

The protein belongs to the LDH/MDH superfamily. LDH family. In terms of assembly, homotetramer. Interacts with PTEN upstream reading frame protein MP31. ISGylated.

It localises to the cytoplasm. The catalysed reaction is (S)-lactate + NAD(+) = pyruvate + NADH + H(+). It functions in the pathway fermentation; pyruvate fermentation to lactate; (S)-lactate from pyruvate: step 1/1. Its function is as follows. Interconverts simultaneously and stereospecifically pyruvate and lactate with concomitant interconversion of NADH and NAD(+). This Macaca fascicularis (Crab-eating macaque) protein is L-lactate dehydrogenase A chain (LDHA).